The chain runs to 375 residues: Alcohol dehydrogenase 1 (375 aa).

Ala1 is subject to N-acetylalanine. Residues Cys46, His68, Cys98, Cys101, Cys104, Cys112, and Cys175 each contribute to the Zn(2+) site. Residues Gly200–Gly205, Asp224, Lys229, Val293–Val295, and Arg370 contribute to the NAD(+) site.

Belongs to the zinc-containing alcohol dehydrogenase family. Class-I subfamily. In terms of assembly, homodimer. Requires Zn(2+) as cofactor.

It localises to the cytoplasm. It catalyses the reaction a primary alcohol + NAD(+) = an aldehyde + NADH + H(+). The enzyme catalyses a secondary alcohol + NAD(+) = a ketone + NADH + H(+). The sequence is that of Alcohol dehydrogenase 1 from Columba livia (Rock dove).